Consider the following 202-residue polypeptide: ATP-dependent Clp protease proteolytic subunit (202 aa).

The active-site Nucleophile is Ser106. His131 is a catalytic residue.

The protein belongs to the peptidase S14 family. Fourteen ClpP subunits assemble into 2 heptameric rings which stack back to back to give a disk-like structure with a central cavity, resembling the structure of eukaryotic proteasomes.

It is found in the cytoplasm. The catalysed reaction is Hydrolysis of proteins to small peptides in the presence of ATP and magnesium. alpha-casein is the usual test substrate. In the absence of ATP, only oligopeptides shorter than five residues are hydrolyzed (such as succinyl-Leu-Tyr-|-NHMec, and Leu-Tyr-Leu-|-Tyr-Trp, in which cleavage of the -Tyr-|-Leu- and -Tyr-|-Trp bonds also occurs).. Functionally, cleaves peptides in various proteins in a process that requires ATP hydrolysis. Has a chymotrypsin-like activity. Plays a major role in the degradation of misfolded proteins. In Acidovorax sp. (strain JS42), this protein is ATP-dependent Clp protease proteolytic subunit.